Reading from the N-terminus, the 193-residue chain is Large ribosomal subunit protein uL18 (193 aa).

Belongs to the universal ribosomal protein uL18 family. As to quaternary structure, part of the 50S ribosomal subunit. Contacts the 5S and 23S rRNAs.

This is one of the proteins that bind and probably mediate the attachment of the 5S RNA into the large ribosomal subunit, where it forms part of the central protuberance. The chain is Large ribosomal subunit protein uL18 from Methanosphaera stadtmanae (strain ATCC 43021 / DSM 3091 / JCM 11832 / MCB-3).